The following is an 87-amino-acid chain: Large ribosomal subunit protein bL27 (87 aa).

The tract at residues 1–25 (MAHKKGASSSRNGRDSNAQRLGVKR) is disordered. The span at 7–19 (ASSSRNGRDSNAQ) shows a compositional bias: polar residues.

Belongs to the bacterial ribosomal protein bL27 family.

In Rhodococcus opacus (strain B4), this protein is Large ribosomal subunit protein bL27.